Reading from the N-terminus, the 186-residue chain is ATP synthase subunit delta (186 aa).

The protein belongs to the ATPase delta chain family. In terms of assembly, F-type ATPases have 2 components, F(1) - the catalytic core - and F(0) - the membrane proton channel. F(1) has five subunits: alpha(3), beta(3), gamma(1), delta(1), epsilon(1). F(0) has three main subunits: a(1), b(2) and c(10-14). The alpha and beta chains form an alternating ring which encloses part of the gamma chain. F(1) is attached to F(0) by a central stalk formed by the gamma and epsilon chains, while a peripheral stalk is formed by the delta and b chains.

It is found in the cell inner membrane. F(1)F(0) ATP synthase produces ATP from ADP in the presence of a proton or sodium gradient. F-type ATPases consist of two structural domains, F(1) containing the extramembraneous catalytic core and F(0) containing the membrane proton channel, linked together by a central stalk and a peripheral stalk. During catalysis, ATP synthesis in the catalytic domain of F(1) is coupled via a rotary mechanism of the central stalk subunits to proton translocation. Functionally, this protein is part of the stalk that links CF(0) to CF(1). It either transmits conformational changes from CF(0) to CF(1) or is implicated in proton conduction. The chain is ATP synthase subunit delta from Azorhizobium caulinodans (strain ATCC 43989 / DSM 5975 / JCM 20966 / LMG 6465 / NBRC 14845 / NCIMB 13405 / ORS 571).